The primary structure comprises 444 residues: Phosphoglucosamine mutase (444 aa).

Serine 104 functions as the Phosphoserine intermediate in the catalytic mechanism. Mg(2+) contacts are provided by serine 104, aspartate 243, aspartate 245, and aspartate 247. The residue at position 104 (serine 104) is a Phosphoserine.

Belongs to the phosphohexose mutase family. Mg(2+) is required as a cofactor. Activated by phosphorylation.

The catalysed reaction is alpha-D-glucosamine 1-phosphate = D-glucosamine 6-phosphate. In terms of biological role, catalyzes the conversion of glucosamine-6-phosphate to glucosamine-1-phosphate. This chain is Phosphoglucosamine mutase, found in Neisseria meningitidis serogroup B (strain ATCC BAA-335 / MC58).